The following is a 166-amino-acid chain: Emerin homolog 1 (166 aa).

In terms of domain architecture, LEM spans 1 to 44 (MDVSQLTDAELRDSLKSHGVSVGPIVATTRKLYEKKLIKLSDGS). Over 1-127 (MDVSQLTDAE…QAQSNKGGFL (127 aa)) the chain is Nuclear. Residues 62–99 (IISSSPKKSPPQRVFQNVSAATAAATTSPESDSDDCEE) form a disordered region. Residues 128-148 (GSTITFTILFVFIAVFAYFLI) traverse the membrane as a helical segment. Topologically, residues 149–166 (ENAEQLKLVAETNPEDTI) are perinuclear space.

As to quaternary structure, interacts with lmn-1 and baf-1. As to expression, ubiquitous. Expressed in all cells, except in cells undergoing spermatogenesis. High expression in hypodermis, neurons, pharyngeal muscle, body wall muscle and gonadal sheath.

The protein resides in the nucleus inner membrane. It localises to the nucleus envelope. Its function is as follows. Nuclear lamina-associated inner nuclear membrane protein that is involved in cell division, nuclear structure organization, maintenance of nuclear envelope integrity and nuclear envelope reformation after mitosis. Involved in chromosome segregation and cell division, probably via its interaction with the nuclear intermediate filament protein lmn-1, the main component of nuclear lamina. Required to organize the distribution of lmn-1, nuclear pore complexes (NPCs) and chromatin in mitotically active cells. Together with lem-2, plays a role in baf-1 enrichment at the nuclear envelope in anaphase. Together with lem-2, involved in muscle cell attachment to hypodermal cells, as well as muscle cell location and sarcomere organization. May play a role in radiation-induced DNA damage repair response. May repress binding of transcription factor pha-4 with target sequences in pharyngeal cells. This is Emerin homolog 1 (emr-1) from Caenorhabditis elegans.